The following is a 655-amino-acid chain: Ankyrin repeat and SAM domain-containing protein 3 (655 aa).

Positions 1-421 are interaction with NEK7; it reads MSELSDEASE…PGSEPQTEKS (421 aa). A phosphoserine mark is found at S2 and S5. ANK repeat units follow at residues 34–64, 68–97, 101–130, 134–163, 168–197, and 201–220; these read DVPLDLHTAASIGQHEVVKECVQRGELDLNK, GGWTALMYASYIGHDTIVHLLLEAGVSVNV, EGQTPLMLASSCGNESIAYFLLQQGAELEM, HGWTALFHCTSAGHQQMVKFLLESGANANV, YGYTPLMEAAASGHEIIVQYFLNHGVKVDT, and SGATACMLARQFGHMKIVAL. A 3-hydroxyasparagine modification is found at N96. Residues S201, S225, S243, S244, and S245 each carry the phosphoserine modification. The disordered stretch occupies residues 314–426; the sequence is YRDVTSPINE…QTEKSPYSGP (113 aa). T318 carries the post-translational modification Phosphothreonine. A phosphoserine mark is found at S319, S366, S369, and S373. The span at 378–395 shows a compositional bias: basic residues; the sequence is KSSVRKQTRSYLKNKSRH. In terms of domain architecture, SAM spans 424–487; sequence SGPQDLATLL…TSAIARWHSS (64 aa). Residues 500–575 adopt a coiled-coil conformation; sequence ADRLETEMQE…AALVLDQLRA (76 aa). The residue at position 540 (S540) is a Phosphoserine.

Homooligomer. Interacts (via SAM domain) with ANKS6 (via SAM domain). Interacts with BICC1. Interacts with NPHP1. Interacts with NEK8. Interacts with HIF1AN. Interacts with NEK7; this interaction alters the subcellular distribution of NEK7 by preventing its nuclear translocation. Hydroxylated at Asn-96, most probably by HIF1AN. Post-translationally, phosphorylations at Ser-5, Ser-225, Thr-318, Ser-319, Ser-366 and Ser-369 occur in a NEK7-dependent manner. In terms of processing, polyubiquitinated. Kidney (at protein level).

The protein localises to the cell projection. Its subcellular location is the cilium. It is found in the cytoplasm. Functionally, may be involved in vasopressin signaling in the kidney. The polypeptide is Ankyrin repeat and SAM domain-containing protein 3 (Anks3) (Mus musculus (Mouse)).